Reading from the N-terminus, the 279-residue chain is uncharacterized protein (279 aa).

The next 3 membrane-spanning stretches (helical) occupy residues 1 to 21 (MGFI…LCGI), 38 to 58 (FACH…SVVA), and 131 to 151 (SLRY…VFID).

The protein belongs to the 1-acyl-sn-glycerol-3-phosphate acyltransferase family.

It localises to the endoplasmic reticulum membrane. This is an uncharacterized protein from Schizosaccharomyces pombe (strain 972 / ATCC 24843) (Fission yeast).